The sequence spans 584 residues: Sodium/calcium exchanger NCL1 (584 aa).

Transmembrane regions (helical) follow at residues Phe-77–Leu-97, Leu-120–Val-140, Val-154–Gly-174, Ala-215–Leu-235, and Val-245–Phe-265. 2 EF-hand domains span residues Pro-305–Glu-340 and Asp-345–Glu-380. Asp-318, Asp-320, Ser-322, Thr-324, Glu-329, Asp-358, Ser-360, Asn-362, and Glu-369 together coordinate Ca(2+). 5 consecutive transmembrane segments (helical) span residues Trp-426–Ala-446, Phe-466–Ile-486, Tyr-504–Ile-524, Phe-531–Phe-551, and Leu-561–Phe-581.

Belongs to the Ca(2+):cation antiporter (CaCA) (TC 2.A.19) family.

The protein resides in the cell membrane. Its function is as follows. May function as a sodium/calcium exchanger (NCX) and participate in the maintenance of calcium homeostasis. May play a role abiotic stress responses. This Oryza sativa subsp. japonica (Rice) protein is Sodium/calcium exchanger NCL1.